The primary structure comprises 685 residues: Dammaradiene synthase (685 aa).

PFTB repeat units lie at residues 82-123 and 265-308; these read MDKM…RLLN and IREA…DPVV. Asp400 serves as the catalytic Proton donor. PFTB repeat units lie at residues 424–465 and 621–672; these read ITRC…KAMV and IGHG…ARYR.

The protein belongs to the terpene cyclase/mutase family.

The enzyme catalyses squalene = dammara-20,24-diene. Its function is as follows. Squalene cyclase producing the tetracyclic triterpene dammaradiene. The polypeptide is Dammaradiene synthase (DCD) (Dryopteris crassirhizoma (Thick stemmed wood fern)).